A 335-amino-acid chain; its full sequence is Glucokinase (335 aa).

11-16 (ADIGGT) contacts ATP.

Belongs to the bacterial glucokinase family.

The protein localises to the cytoplasm. It catalyses the reaction D-glucose + ATP = D-glucose 6-phosphate + ADP + H(+). The polypeptide is Glucokinase (Stenotrophomonas maltophilia (strain K279a)).